The primary structure comprises 551 residues: UvrABC system protein C (551 aa).

The GIY-YIG domain occupies 12–87 (EKPGVYIFKN…IFKHKPKYNI (76 aa)). The region spanning 193 to 228 (EFVKDYIEQKMNYHSKMLDFENAAKYRDLLLSFEKL) is the UVR domain.

This sequence belongs to the UvrC family. As to quaternary structure, interacts with UvrB in an incision complex.

The protein localises to the cytoplasm. In terms of biological role, the UvrABC repair system catalyzes the recognition and processing of DNA lesions. UvrC both incises the 5' and 3' sides of the lesion. The N-terminal half is responsible for the 3' incision and the C-terminal half is responsible for the 5' incision. The sequence is that of UvrABC system protein C from Thermosipho africanus (strain TCF52B).